Here is a 170-residue protein sequence, read N- to C-terminus: 3-hydroxydecanoyl-[acyl-carrier-protein] dehydratase (170 aa).

Residue His-69 is part of the active site.

This sequence belongs to the thioester dehydratase family. FabA subfamily. Homodimer.

Its subcellular location is the cytoplasm. It catalyses the reaction a (3R)-hydroxyacyl-[ACP] = a (2E)-enoyl-[ACP] + H2O. The enzyme catalyses (3R)-hydroxydecanoyl-[ACP] = (2E)-decenoyl-[ACP] + H2O. The catalysed reaction is (2E)-decenoyl-[ACP] = (3Z)-decenoyl-[ACP]. The protein operates within lipid metabolism; fatty acid biosynthesis. Necessary for the introduction of cis unsaturation into fatty acids. Catalyzes the dehydration of (3R)-3-hydroxydecanoyl-ACP to E-(2)-decenoyl-ACP and then its isomerization to Z-(3)-decenoyl-ACP. Can catalyze the dehydratase reaction for beta-hydroxyacyl-ACPs with saturated chain lengths up to 16:0, being most active on intermediate chain length. The protein is 3-hydroxydecanoyl-[acyl-carrier-protein] dehydratase of Caulobacter vibrioides (strain ATCC 19089 / CIP 103742 / CB 15) (Caulobacter crescentus).